Reading from the N-terminus, the 253-residue chain is Ribosomal RNA small subunit methyltransferase J (253 aa).

S-adenosyl-L-methionine is bound by residues R101 to D102, E117 to R118, and D169.

It belongs to the methyltransferase superfamily. RsmJ family.

It is found in the cytoplasm. The enzyme catalyses guanosine(1516) in 16S rRNA + S-adenosyl-L-methionine = N(2)-methylguanosine(1516) in 16S rRNA + S-adenosyl-L-homocysteine + H(+). Its function is as follows. Specifically methylates the guanosine in position 1516 of 16S rRNA. In Psychromonas ingrahamii (strain DSM 17664 / CCUG 51855 / 37), this protein is Ribosomal RNA small subunit methyltransferase J.